Consider the following 186-residue polypeptide: UPF0301 protein LHK_02881 (186 aa).

This sequence belongs to the UPF0301 (AlgH) family.

This Laribacter hongkongensis (strain HLHK9) protein is UPF0301 protein LHK_02881.